A 149-amino-acid chain; its full sequence is Deoxyuridine 5'-triphosphate nucleotidohydrolase (149 aa).

Residues 68–70, Asn-81, and 85–87 contribute to the substrate site; these read RSG and LID.

This sequence belongs to the dUTPase family. The cofactor is Mg(2+).

It catalyses the reaction dUTP + H2O = dUMP + diphosphate + H(+). The protein operates within pyrimidine metabolism; dUMP biosynthesis; dUMP from dCTP (dUTP route): step 2/2. In terms of biological role, this enzyme is involved in nucleotide metabolism: it produces dUMP, the immediate precursor of thymidine nucleotides and it decreases the intracellular concentration of dUTP so that uracil cannot be incorporated into DNA. In Nitrosomonas eutropha (strain DSM 101675 / C91 / Nm57), this protein is Deoxyuridine 5'-triphosphate nucleotidohydrolase.